Reading from the N-terminus, the 1020-residue chain is Nucleotide-binding oligomerization domain-containing protein 2 (1020 aa).

CARD domains lie at 6–104 and 106–200; these read CDMC…GSWD and HSLH…AECQ. An ATG16L1-binding motif motif is present at residues 43-57; that stretch reads WDVLSREDYEGLSLP. Residues Thr219, Tyr232, Thr233, Gly282, Ser283, Gly284, Lys285, Ser286, and Thr287 each contribute to the ADP site. The segment at 221-254 is required for CARD9 binding; the sequence is DGSENLCLEDIYTENILELQTEVGTAGALQKSPA. The NACHT domain maps to 273–600; sequence DTILVVGEAG…AAFYLAVSAD (328 aa). Cys375 carries the S-palmitoyl cysteine lipid modification. His583 is a binding site for ADP. 10 LRR repeats span residues 685–709, 726–749, 766–792, 794–817, 822–845, 850–873, 906–929, 934–962, 963–985, and 1005–1019; these read ARAR…VPGE, LYEM…HLKL, LQHL…QLRP, LGVC…TLVE, CEQL…SMAK, KQNF…VLAQ, HQNL…ALAL, NKSL…LKRN, STLK…ALLQ, and LEEI…ARLL.

This sequence belongs to the NOD1-NOD2 family. Homooligomer: homooligomerizes following muramyl dipeptide (MDP)-binding, promoting RIPK2 recruitment. Interacts (via CARD domain) with RIPK2 (via CARD domain). Following RIPK2 recruitment, RIPK2 homooligomerizes via its CARD domain and forms long filaments named RIPosomes. Interacts (via CARD domain) with ubiquitin; inhibiting interaction with RIPK2. Component of a signaling complex consisting of ARHGEF2, NOD2 and RIPK2. Interacts with ANKRD17 (via N-terminus). Interacts with HSPA1A; the interaction enhances NOD2 stability. Interacts (via both CARD domains) with HSP90; the interaction enhances NOD2 stability. Interacts (via CARD domain) with SOCS3; the interaction promotes NOD2 degradation. Interacts (via CARD domain) with ERBIN; the interaction inhibits activation of NOD2. Interacts with MAPKBP1; the interaction is enhanced in the presence of muramyl dipeptide (MDP) and inhibits NOD2 homooligomerization and activation. Interacts with INAVA; the interaction takes place upon Pattern recognition receptor (PRR) stimulation. Interacts (via NACHT domain) with CARD9. Interacts (via CARD domain) with CASP1; this interaction leads to IL1B processing. Also interacts with CASP4. Interacts with NLRP1; this interaction is enhanced in the presence of muramyl dipeptide (MDP) and leads to increased IL1B release. Interacts with NLRP12; this interaction promotes degradation of NOD2 through the ubiquitin-proteasome pathway. Interacts with ANKHD1, C10orf67, CHMP5, DOCK7, ENTR1, KRT15, LDOC1, PPP1R12C, PPP2R3B, TRIM41 and VIM. Interacts with MAVS; interaction takes place following single-stranded RNA (ssRNA)-binding. Interacts with ATG16L1. Interacts with Irgm1; promoting Irgm1 'Lys-63'-linked polyubiquitination, which is required for interactions with the core autophagy factors. Post-translationally, palmitoylated by ZDHHC5; palmitoylation is required for proper recruitment to the bacterial entry site and hence for proper signaling upon cognate peptidoglycan detection. Palmitoylation promotes localization to the cell membrane. Palmitoylation protects from SQSTM1/p62-dependent autophagic degradation. In terms of processing, polyubiquitinated by TRIM27, leading to proteasome-mediated degradation. Polyubiquitinated and degraded following muramyl dipeptide (MDP) stimulation, conferring MDP tolerance and preventing septic shock. Degraded via selective autophagy following interaction with Irgm1. Irgm1 promotes NOD2-RIPK2 RIPosome recruitment to autophagosome membranes, promoting their SQSTM1/p62-dependent autophagic degradation. Post-translationally, O-glycosylated by OGT, O-GlcNAcylation increases protein stability. In terms of tissue distribution, expressed in monocytes, macrophages, dendritic cells, hepatocytes, preadipocytes, epithelial cells of oral cavity, lung and intestine. In intestine, highly expressed in ileal Paneth cells of the crypt and in intestinal stem cells. Also expressed in neurons of several brain regions including the hypothalamus.

It localises to the cell membrane. The protein resides in the basolateral cell membrane. It is found in the cytoplasm. The protein localises to the mitochondrion. ADP-binding promotes an inactive closed conformation. In terms of biological role, pattern recognition receptor (PRR) that detects bacterial peptidoglycan fragments and other danger signals and plays an important role in gastrointestinal immunity. Specifically activated by muramyl dipeptide (MDP), a fragment of bacterial peptidoglycan found in every bacterial peptidoglycan type. NOD2 specifically recognizes and binds 6-O-phospho-MDP, the phosphorylated form of MDP, which is generated by NAGK. 6-O-phospho-MDP-binding triggers oligomerization that facilitates the binding and subsequent activation of the proximal adapter receptor-interacting RIPK2. Following recruitment, RIPK2 undergoes 'Met-1'- (linear) and 'Lys-63'-linked polyubiquitination by E3 ubiquitin-protein ligases XIAP, BIRC2, BIRC3 and the LUBAC complex, becoming a scaffolding protein for downstream effectors, triggering activation of the NF-kappa-B and MAP kinases signaling. This in turn leads to the transcriptional activation of hundreds of genes involved in immune response. Its ability to detect bacterial MDP plays a central role in maintaining the equilibrium between intestinal microbiota and host immune responses to control inflammation. An imbalance in this relationship results in dysbiosis, whereby pathogenic bacteria prevail on commensals, causing damage in the intestinal epithelial barrier as well as allowing bacterial invasion and inflammation. Acts as a regulator of appetite by sensing MDP in a subset of brain neurons: microbiota-derived MDP reach the brain, where they bind and activate NOD2 in inhibitory hypothalamic neurons, decreasing neuronal activity, thereby regulating satiety and body temperature. NOD2-dependent MDP-sensing of bacterial cell walls in the intestinal epithelial compartment contributes to sustained postnatal growth upon undernutrition. Also plays a role in antiviral response by acting as a sensor of single-stranded RNA (ssRNA) from viruses: upon ssRNA-binding, interacts with MAVS, leading to activation of interferon regulatory factor-3/IRF3 and expression of type I interferon. Also acts as a regulator of autophagy in dendritic cells via its interaction with ATG16L1, possibly by recruiting ATG16L1 at the site of bacterial entry. NOD2 activation in the small intestine crypt also contributes to intestinal stem cells survival and function: acts by promoting mitophagy via its association with ATG16L1. In addition to its main role in innate immunity, also regulates the adaptive immune system by acting as regulator of helper T-cell and regulatory T-cells (Tregs). Besides recognizing pathogens, also involved in the endoplasmic reticulum stress response: acts by sensing and binding to the cytosolic metabolite sphingosine-1-phosphate generated in response to endoplasmic reticulum stress, initiating an inflammation process that leads to activation of the NF-kappa-B and MAP kinases signaling. May also be involved in NLRP1 activation following activation by MDP, leading to CASP1 activation and IL1B release in macrophages. This chain is Nucleotide-binding oligomerization domain-containing protein 2, found in Mus musculus (Mouse).